A 130-amino-acid polypeptide reads, in one-letter code: Phosphoribosyl-AMP cyclohydrolase (130 aa).

Position 77 (D77) interacts with Mg(2+). C78 provides a ligand contact to Zn(2+). D79 and D81 together coordinate Mg(2+). Residues C95 and C102 each contribute to the Zn(2+) site.

Belongs to the PRA-CH family. In terms of assembly, homodimer. It depends on Mg(2+) as a cofactor. Requires Zn(2+) as cofactor.

Its subcellular location is the cytoplasm. The enzyme catalyses 1-(5-phospho-beta-D-ribosyl)-5'-AMP + H2O = 1-(5-phospho-beta-D-ribosyl)-5-[(5-phospho-beta-D-ribosylamino)methylideneamino]imidazole-4-carboxamide. The protein operates within amino-acid biosynthesis; L-histidine biosynthesis; L-histidine from 5-phospho-alpha-D-ribose 1-diphosphate: step 3/9. In terms of biological role, catalyzes the hydrolysis of the adenine ring of phosphoribosyl-AMP. This chain is Phosphoribosyl-AMP cyclohydrolase, found in Pseudomonas putida (strain GB-1).